Here is a 125-residue protein sequence, read N- to C-terminus: Fluoride-specific ion channel FluC (125 aa).

The next 4 helical transmembrane spans lie at 4–24, 32–52, 67–87, and 100–120; these read LMLVCLGGAIGAGMRHLTVTA, AFPWGTLAVNVAGSFAMGLLV, LLLAPGMLGGFTTFSAFSLDV, and LAYVLASVAGSILALFVGLWL. The Na(+) site is built by Gly75 and Thr78.

It belongs to the fluoride channel Fluc/FEX (TC 1.A.43) family.

It localises to the cell inner membrane. It carries out the reaction fluoride(in) = fluoride(out). Its activity is regulated as follows. Na(+) is not transported, but it plays an essential structural role and its presence is essential for fluoride channel function. In terms of biological role, fluoride-specific ion channel. Important for reducing fluoride concentration in the cell, thus reducing its toxicity. The chain is Fluoride-specific ion channel FluC from Chelativorans sp. (strain BNC1).